The primary structure comprises 185 residues: Large ribosomal subunit protein uL13 (185 aa).

The protein belongs to the universal ribosomal protein uL13 family. Part of the 50S ribosomal subunit.

In terms of biological role, this protein is one of the early assembly proteins of the 50S ribosomal subunit, although it is not seen to bind rRNA by itself. It is important during the early stages of 50S assembly. In Pyrobaculum islandicum (strain DSM 4184 / JCM 9189 / GEO3), this protein is Large ribosomal subunit protein uL13.